Consider the following 227-residue polypeptide: Germin-like protein subfamily 1 member 6 (227 aa).

A signal peptide spans 1-25 (MMEVLLRLLVTQVILLALATSFVSC). Cysteines 35 and 51 form a disulfide. The region spanning 65 to 216 (SGLNIARNTT…AFQLDVKLVR (152 aa)) is the Cupin type-1 domain. N-linked (GlcNAc...) asparagine glycosylation is found at N72 and N80. H113, H115, E120, and H162 together coordinate Mn(2+).

Belongs to the germin family. Oligomer (believed to be a pentamer but probably hexamer).

Its subcellular location is the secreted. It localises to the extracellular space. The protein resides in the apoplast. Functionally, may play a role in plant defense. Probably has no oxalate oxidase activity even if the active site is conserved. In Arabidopsis thaliana (Mouse-ear cress), this protein is Germin-like protein subfamily 1 member 6.